Consider the following 111-residue polypeptide: Putative splicing factor C222.18 (111 aa).

The RRM domain maps to 18–95 (HTLYIRNFGT…DIIFVEWAKS (78 aa)).

This sequence belongs to the splicing factor SR family.

Its subcellular location is the nucleus. Its function is as follows. Has a role in pre-mRNA splicing where it is involved in spliceosome assembly. In Schizosaccharomyces pombe (strain 972 / ATCC 24843) (Fission yeast), this protein is Putative splicing factor C222.18.